A 340-amino-acid polypeptide reads, in one-letter code: Major histocompatibility complex class I-related protein 1 (340 aa).

The first 22 residues, 1–22 (MGELTAFLLPLIIVLMVKHSNS), serve as a signal peptide directing secretion. Positions 23–109 (RTHSLRYFRL…KRLQRHYNHS (87 aa)) are alpha-1. Residues 23–201 (RTHSLRYFRL…EYGKDTLQRT (179 aa)) form an antigen-binding cleft region. Topologically, residues 23–302 (RTHSLRYFRL…QESEAIPLVM (280 aa)) are extracellular. Tyrosine 29 and arginine 31 together coordinate 8-(9H-purin-6-yl)-2-oxa-8-azabicyclo[3.3.1]nona-3,6-diene-4,6-dicarbaldehyde. 5-(2-oxoethylideneamino)-6-(D-ribitylamino)uracil is bound by residues arginine 31, serine 46, and lysine 65. 5-(2-oxopropylideneamino)-6-(D-ribitylamino)uracil contacts are provided by arginine 31, serine 46, and lysine 65. 3 residues coordinate 7-hydroxy-6-methyl-8-(1-D-ribityl)lumazine: arginine 31, serine 46, and lysine 65. Positions 65 and 80 each coordinate 8-(9H-purin-6-yl)-2-oxa-8-azabicyclo[3.3.1]nona-3,6-diene-4,6-dicarbaldehyde. Lysine 65 is a 2-amino-4-oxopteridine-6-carbaldehyde binding site. Lysine 65 contacts pyridoxal. An N-linked (GlcNAc...) asparagine glycan is attached at asparagine 107. Positions 110–201 (GSHTYQRMIG…EYGKDTLQRT (92 aa)) are alpha-2. Arginine 116 lines the 8-(9H-purin-6-yl)-2-oxa-8-azabicyclo[3.3.1]nona-3,6-diene-4,6-dicarbaldehyde pocket. Arginine 116, tyrosine 174, and glutamine 175 together coordinate 5-(2-oxoethylideneamino)-6-(D-ribitylamino)uracil. Residues arginine 116, tyrosine 174, and glutamine 175 each contribute to the 5-(2-oxopropylideneamino)-6-(D-ribitylamino)uracil site. Arginine 116, tyrosine 174, and glutamine 175 together coordinate 7-hydroxy-6-methyl-8-(1-D-ribityl)lumazine. 2 disulfides stabilise this stretch: cysteine 120–cysteine 183 and cysteine 222–cysteine 278. Positions 202 to 293 (EPPLVRVNRK…GVHVVLQVPQ (92 aa)) are alpha-3. The 80-residue stretch at 203–282 (PPLVRVNRKE…SNLYSCHVEH (80 aa)) folds into the Ig-like C1-type domain. The interval 294 to 302 (ESEAIPLVM) is connecting peptide. The helical transmembrane segment at 303-323 (KAVSGSIVFVIVLAGVGVLVW) threads the bilayer. The Cytoplasmic portion of the chain corresponds to 324–340 (RRRPREQNGAVYLPTPD).

This sequence belongs to the MHC class I family. Heterotrimer that consists of MR1, B2M and metabolite antigen. Major classes of metabolite ligands presented by MR1 include riboflavin-related antigens, pyrimidines and ribityl lumazines, nucleobase adducts and folate derivatives. Forms reversible covalent Schiff base complexes with microbial pyrimidine-based metabolite, which serves as a molecular switch triggering complete folding, stable association with B2M and translocation of the ternary complex from endoplasmic reticulum to the plasma membrane. Alternatively, forms non-Schiff base complexes with ribityl lumazines. On antigen-presenting cells, the ternary complex interacts with TCR on MR1-restricted T cells. Interacts with TAPBP and TAPBPL chaperones in the endoplasmic reticulum. TAPBP associated or not with MHC class I peptide loading complex binds ligand-free MR1 or MR1-B2M complex, providing for stable MR1 pools ready for metabolite antigen processing. TAPBPL interacts with MR1 in a ligand-independent way; this interaction may stabilize MR1 pool and facilitate ligand loading and dissociation. Structurally, MR1-B2M heterodimer adopts a topology similar to classical MHC class I molecules, with alpha-1 and alpha-2 domains of MR1 forming the antigen-binding cleft composed of two alpha-helices resting on a floor of 7-stranded anti-parallel beta-pleated sheet. MR1-B2M heterodimer (via alpha-helices) interacts with TCR (via CDR domains). N-glycosylated.

The protein resides in the cell membrane. Its subcellular location is the endoplasmic reticulum membrane. The protein localises to the golgi apparatus membrane. It is found in the early endosome membrane. It localises to the late endosome membrane. Its function is as follows. Antigen-presenting molecule specialized in displaying microbial pyrimidine-based metabolites to alpha-beta T cell receptors (TCR) on innate-type mucosal-associated invariant T (MAIT) cells. In complex with B2M preferentially presents riboflavin-derived metabolites to semi-invariant TCRs on MAIT cells, guiding immune surveillance of the microbial metabolome at mucosal epithelial barriers. Signature pyrimidine-based microbial antigens are generated via non-enzymatic condensation of metabolite intermediates of the riboflavin pathway with by-products arising from other metabolic pathways such as glycolysis. Typical potent antigenic metabolites are 5-(2-oxoethylideneamino)-6-D-ribitylaminouracil (5-OE-RU) and 5-(2-oxopropylideneamino)-6-D-ribitylaminouracil (5-OP-RU), products of condensation of 5-amino-6-D-ribityaminouracil (5-A-RU) with glyoxal or methylglyoxal by-products, respectively. May present microbial antigens to various MAIT cell subsets, providing for unique recognition of diverse microbes, including pathogens that do not synthesize riboflavin. Upon antigen recognition, elicits rapid innate-type MAIT cell activation to eliminate pathogenic microbes by directly killing infected cells. During T cell development, drives thymic selection and post-thymic terminal differentiation of MAIT cells in a process dependent on commensal microflora. Acts as an immune sensor of cancer cell metabolome. May present a tumor-specific or -associated metabolite essential for cancer cell survival to a pan-cancer TCR on a non-MAIT CD8-positive T cell clone, triggering T cell-mediated killing of a wide range of cancer cell types. May present tumor-enriched pyridoxal and pyridoxal 5'-phosphate antigens, enabling preferential recognition of cancer cells. Presents nucleobase carbonyl adducts generated during oxidative stress. Captures M3Ade, a nucleobase adduct composed of one adenine modified by a malondialdehyde trimer, for recognition by MR1-restricted T cell clones expressing a polyclonal TCR repertoire. The sequence is that of Major histocompatibility complex class I-related protein 1 from Pongo abelii (Sumatran orangutan).